A 347-amino-acid polypeptide reads, in one-letter code: Glutamyl-Q tRNA(Asp) synthetase (347 aa).

Residues 31-35 and Glu67 contribute to the L-glutamate site; that span reads RFAPS. A 'HIGH' region motif is present at residues 34 to 44; sequence PSPTSALHLGN. Zn(2+)-binding residues include Cys121, Cys123, Tyr143, and Cys147. L-glutamate is bound by residues Tyr203 and Arg221. Positions 259–263 match the 'KMSKS' region motif; the sequence is RLSKS. Lys262 lines the ATP pocket.

Belongs to the class-I aminoacyl-tRNA synthetase family. GluQ subfamily. Zn(2+) is required as a cofactor.

Catalyzes the tRNA-independent activation of glutamate in presence of ATP and the subsequent transfer of glutamate onto a tRNA(Asp). Glutamate is transferred on the 2-amino-5-(4,5-dihydroxy-2-cyclopenten-1-yl) moiety of the queuosine in the wobble position of the QUC anticodon. The protein is Glutamyl-Q tRNA(Asp) synthetase of Cutibacterium acnes (strain DSM 16379 / KPA171202) (Propionibacterium acnes).